A 192-amino-acid polypeptide reads, in one-letter code: MLGLRLIVGLGNPGSEYIKTRHNAGFRFVDGLVQREGQCWALESKLFAYVARVFIAGQWVWLLRPVTFMNLSGKSIFAGLNFWKIKPEQMLVAHDELDFPPGAVRLKFDGGHGGQNGLRDITKLLGHGRFHRLRVGIGHPGHKERVVSWVLGCPTCDENIAIDAALERASVVLPLAVAGDFDGAMKKLHTVV.

Tyr-17 lines the tRNA pocket. The Proton acceptor role is filled by His-22. 3 residues coordinate tRNA: Phe-68, Asn-70, and Asn-116.

Belongs to the PTH family. Monomer.

The protein localises to the cytoplasm. The catalysed reaction is an N-acyl-L-alpha-aminoacyl-tRNA + H2O = an N-acyl-L-amino acid + a tRNA + H(+). In terms of biological role, hydrolyzes ribosome-free peptidyl-tRNAs (with 1 or more amino acids incorporated), which drop off the ribosome during protein synthesis, or as a result of ribosome stalling. Its function is as follows. Catalyzes the release of premature peptidyl moieties from peptidyl-tRNA molecules trapped in stalled 50S ribosomal subunits, and thus maintains levels of free tRNAs and 50S ribosomes. The polypeptide is Peptidyl-tRNA hydrolase (Xylella fastidiosa (strain M12)).